The following is a 414-amino-acid chain: MRYLPEVDPEIYEAIKSEEYREEYHLELIASENFVSRAVLEAQGSVLTNKYAEGYPGKRYYGGCMYVDKVEDIARERVKTIYGAEHANVQPHSGSQANMAVYFVVLNPGDNVLGMNLAHGGHLTHGSPVNFSGKLYNFYFYGVDRDTEMINYDSVWNLAKEVKPKLIVAGASAYPRIIDFEKFAQIAEDVGAYFMVDMAHIAGLVAAGLHPSPVPYAHFVTSTTHKTLRGPRGGFILCKKEFAKEIDKAVFPGIQGGPLMHVIAAKAVAFKEAMTPEFKEYQKQIILNAKAMAEELMRLGYRLVSGGTDNHLMLVDLRDKGITGKEAEKALEEAGITVNKNAIPFDPQPPTVTSGIRIGTPALTTRGMKEDEMRYVARLIHEVLSNFKDSKVKEKVKKEVEELCKQFPIYRKEN.

Residues Leu117 and 121–123 (GHL) contribute to the (6S)-5,6,7,8-tetrahydrofolate site. At Lys226 the chain carries N6-(pyridoxal phosphate)lysine.

It belongs to the SHMT family. Homodimer. Requires pyridoxal 5'-phosphate as cofactor.

The protein resides in the cytoplasm. The enzyme catalyses (6R)-5,10-methylene-5,6,7,8-tetrahydrofolate + glycine + H2O = (6S)-5,6,7,8-tetrahydrofolate + L-serine. It participates in one-carbon metabolism; tetrahydrofolate interconversion. The protein operates within amino-acid biosynthesis; glycine biosynthesis; glycine from L-serine: step 1/1. In terms of biological role, catalyzes the reversible interconversion of serine and glycine with tetrahydrofolate (THF) serving as the one-carbon carrier. This reaction serves as the major source of one-carbon groups required for the biosynthesis of purines, thymidylate, methionine, and other important biomolecules. Also exhibits THF-independent aldolase activity toward beta-hydroxyamino acids, producing glycine and aldehydes, via a retro-aldol mechanism. This is Serine hydroxymethyltransferase from Dictyoglomus thermophilum (strain ATCC 35947 / DSM 3960 / H-6-12).